The sequence spans 216 residues: Cytidylate kinase (216 aa).

An ATP-binding site is contributed by 9–17 (GPAASGKGT).

It belongs to the cytidylate kinase family. Type 1 subfamily.

It localises to the cytoplasm. It carries out the reaction CMP + ATP = CDP + ADP. The enzyme catalyses dCMP + ATP = dCDP + ADP. The polypeptide is Cytidylate kinase (Caulobacter sp. (strain K31)).